A 393-amino-acid polypeptide reads, in one-letter code: NAD(P)H-quinone oxidoreductase subunit H, chloroplastic (393 aa).

This sequence belongs to the complex I 49 kDa subunit family. NDH is composed of at least 16 different subunits, 5 of which are encoded in the nucleus.

The protein resides in the plastid. It is found in the chloroplast thylakoid membrane. The catalysed reaction is a plastoquinone + NADH + (n+1) H(+)(in) = a plastoquinol + NAD(+) + n H(+)(out). The enzyme catalyses a plastoquinone + NADPH + (n+1) H(+)(in) = a plastoquinol + NADP(+) + n H(+)(out). Its function is as follows. NDH shuttles electrons from NAD(P)H:plastoquinone, via FMN and iron-sulfur (Fe-S) centers, to quinones in the photosynthetic chain and possibly in a chloroplast respiratory chain. The immediate electron acceptor for the enzyme in this species is believed to be plastoquinone. Couples the redox reaction to proton translocation, and thus conserves the redox energy in a proton gradient. This chain is NAD(P)H-quinone oxidoreductase subunit H, chloroplastic, found in Solanum lycopersicum (Tomato).